We begin with the raw amino-acid sequence, 206 residues long: Small ribosomal subunit protein uS4 (206 aa).

The region spanning 98 to 163 (MRLDNVVYRL…SEKFKTFVEN (66 aa)) is the S4 RNA-binding domain.

Belongs to the universal ribosomal protein uS4 family. As to quaternary structure, part of the 30S ribosomal subunit. Contacts protein S5. The interaction surface between S4 and S5 is involved in control of translational fidelity.

Its function is as follows. One of the primary rRNA binding proteins, it binds directly to 16S rRNA where it nucleates assembly of the body of the 30S subunit. In terms of biological role, with S5 and S12 plays an important role in translational accuracy. The sequence is that of Small ribosomal subunit protein uS4 from Clostridium botulinum (strain Alaska E43 / Type E3).